A 351-amino-acid polypeptide reads, in one-letter code: MTQAWWRDACQPLDNAAMDQARARQQQLTKPAGSLGQLEALAIQLAGLQGLERPTLDQVAITIFAGDHGVVEEGISAYPQAVTGQMLRNFVGGGAAISVLARQLQASLDVVDLGTIDAQLELPGVRHLRLGTGTANFARQPAMTENQLQAALQAGRDSAQRAAEQGAQLFIGGEMGIGNTTAAAALASVLLGCPASELSGPGTGLDNAGVQHKAEVIERALRLHGLRAEDPLQALACVGGFEIAALAGAYLGCAQAGVTVLVDGFICSVAALVAVRLNPQCRAWLLFAHQGAEPGHKTLLAALQAEPLLALGLRLGEGSGAALAVPLLRLACALHGQMATFAEAAVADRPA.

Glu317 acts as the Proton acceptor in catalysis.

The protein belongs to the CobT family.

The enzyme catalyses 5,6-dimethylbenzimidazole + nicotinate beta-D-ribonucleotide = alpha-ribazole 5'-phosphate + nicotinate + H(+). The protein operates within nucleoside biosynthesis; alpha-ribazole biosynthesis; alpha-ribazole from 5,6-dimethylbenzimidazole: step 1/2. In terms of biological role, catalyzes the synthesis of alpha-ribazole-5'-phosphate from nicotinate mononucleotide (NAMN) and 5,6-dimethylbenzimidazole (DMB). The sequence is that of Nicotinate-nucleotide--dimethylbenzimidazole phosphoribosyltransferase from Pseudomonas putida (strain ATCC 47054 / DSM 6125 / CFBP 8728 / NCIMB 11950 / KT2440).